We begin with the raw amino-acid sequence, 600 residues long: Elongation factor 4 (600 aa).

The region spanning 5–187 (KYIRNFSIVA…EIVEKIPAPE (183 aa)) is the tr-type G domain. GTP-binding positions include 17–22 (DHGKST) and 134–137 (NKVD).

It belongs to the TRAFAC class translation factor GTPase superfamily. Classic translation factor GTPase family. LepA subfamily.

It is found in the cell membrane. The catalysed reaction is GTP + H2O = GDP + phosphate + H(+). Functionally, required for accurate and efficient protein synthesis under certain stress conditions. May act as a fidelity factor of the translation reaction, by catalyzing a one-codon backward translocation of tRNAs on improperly translocated ribosomes. Back-translocation proceeds from a post-translocation (POST) complex to a pre-translocation (PRE) complex, thus giving elongation factor G a second chance to translocate the tRNAs correctly. Binds to ribosomes in a GTP-dependent manner. The chain is Elongation factor 4 from Clostridium perfringens (strain 13 / Type A).